A 146-amino-acid chain; its full sequence is Large ribosomal subunit protein uL15 (146 aa).

The segment at 1-51 (MKLHELQPAPGSRKERNRVGRGIGSGNGKTSGKGHKGQNARSGGGVRIGFE) is disordered. Composition is skewed to gly residues over residues 21–31 (RGIGSGNGKTS) and 42–51 (SGGGVRIGFE).

It belongs to the universal ribosomal protein uL15 family. As to quaternary structure, part of the 50S ribosomal subunit.

Binds to the 23S rRNA. The polypeptide is Large ribosomal subunit protein uL15 (Anoxybacillus flavithermus (strain DSM 21510 / WK1)).